Consider the following 472-residue polypeptide: MKSAAYLAALAAVLPAYVNAQAQEWGQCGGIGWTGATTCVSGTVCTVLNPYYSQCLPGTATTAPPPPPPPPTSVSSSSSSSTSSAPPSGPSGTSPTCSVASTIPGFSNAALPNPFVFNDGSPVQSKADFTCRQQQILALIQGYEAGALPGPPQSVTASFSKSGSTGTLSITVTDNGKSISFAPTISIPSGTPPANGWPLVIAFEGGSIPIPAGIAKLTYSNSDMAQQTDTSSRGKGLFYNLYGSGATASAMTAWAWGVSRIIDALEKTPSAQINTQRIAVTGCSRDGKGALMAGALEPRIALTIPQESGSGGDTCWRLSKAESDQGHQVQTATEIVTENVWFSTNFNNYVNNLNVLPYDHHMLMALVAPRALVSFENTDYTWLSPMSAWGCVNAAHTVFSALGVADHHGFAQVGGHAHCAWPDSLTPSLNAFFNRFLLDQNVDTNVFTTNNQFGGATWTQSSWINWSTPTLS.

Residues 1–20 form the signal peptide; it reads MKSAAYLAALAAVLPAYVNA. The CBM1 domain maps to 21–56; that stretch reads QAQEWGQCGGIGWTGATTCVSGTVCTVLNPYYSQCL. The tract at residues 62 to 97 is disordered; sequence TAPPPPPPPPTSVSSSSSSSTSSAPPSGPSGTSPTC. Over residues 63 to 72 the composition is skewed to pro residues; it reads APPPPPPPPT. A compositionally biased stretch (low complexity) spans 73–96; the sequence is SVSSSSSSSTSSAPPSGPSGTSPT. Disulfide bonds link Cys-97-Cys-131, Cys-283-Cys-419, and Cys-315-Cys-391. The short motif at 282–287 is the GXSYXG catalytic site motif element; it reads GCSRDG. Ser-284 serves as the catalytic Nucleophile. Residues Lys-288, Gln-330, Glu-338, and Trp-382 each contribute to the substrate site. His-418 functions as the Proton donor/acceptor in the catalytic mechanism. An N-linked (GlcNAc...) asparagine glycan is attached at Asn-465.

Belongs to the carbohydrate esterase 15 (CE15) family.

It localises to the secreted. It carries out the reaction a 4-O-methyl-alpha-D-glucuronosyl ester derivative + H2O = 4-O-methyl-alpha-D-glucuronate derivative + an alcohol + H(+). Functionally, glucuronoyl esterase which may play a significant role in biomass degradation, as it is considered to disconnect hemicellulose from lignin through the hydrolysis of the ester bond between 4-O-methyl-D-glucuronic acid residues of glucuronoxylans and aromatic alcohols of lignin. Can hydrolyze benzyl glucuronic acid (BnGlcA), allyl glucuronic acid (allylGlcA) and to a lower degree methyl glucuronic acid (MeGlcA) in vitro. This Phanerochaete chrysosporium (strain RP-78 / ATCC MYA-4764 / FGSC 9002) (White-rot fungus) protein is 4-O-methyl-glucuronoyl methylesterase 1.